A 201-amino-acid chain; its full sequence is UPF0637 protein LSEI_1198 (201 aa).

It belongs to the UPF0637 family.

The protein is UPF0637 protein LSEI_1198 of Lacticaseibacillus paracasei (strain ATCC 334 / BCRC 17002 / CCUG 31169 / CIP 107868 / KCTC 3260 / NRRL B-441) (Lactobacillus paracasei).